The following is a 375-amino-acid chain: 23S rRNA (uracil(747)-C(5))-methyltransferase RlmC (375 aa).

Positions 3, 11, 14, and 87 each coordinate [4Fe-4S] cluster. S-adenosyl-L-methionine contacts are provided by Q212, F241, E262, and N307. C334 (nucleophile) is an active-site residue.

It belongs to the class I-like SAM-binding methyltransferase superfamily. RNA M5U methyltransferase family. RlmC subfamily.

The enzyme catalyses uridine(747) in 23S rRNA + S-adenosyl-L-methionine = 5-methyluridine(747) in 23S rRNA + S-adenosyl-L-homocysteine + H(+). In terms of biological role, catalyzes the formation of 5-methyl-uridine at position 747 (m5U747) in 23S rRNA. This is 23S rRNA (uracil(747)-C(5))-methyltransferase RlmC from Escherichia coli O45:K1 (strain S88 / ExPEC).